Consider the following 155-residue polypeptide: uncharacterized protein (155 aa).

The signal sequence occupies residues 1–24 (MQQLSKRRLSALFVTAFLPVTAFA).

This is an uncharacterized protein from Chromohalobacter salexigens (strain ATCC BAA-138 / DSM 3043 / CIP 106854 / NCIMB 13768 / 1H11).